The sequence spans 146 residues: Large ribosomal subunit protein uL15 (146 aa).

The segment at 1–52 is disordered; the sequence is MKLSNLSPKAGSKKRRRRVGRGIAAGQGASCGFGMRGQKSRSGTGTKAGFEG. A compositionally biased stretch (basic residues) spans 11 to 20; it reads GSKKRRRRVG. The span at 23–35 shows a compositional bias: gly residues; it reads IAAGQGASCGFGM.

Belongs to the universal ribosomal protein uL15 family. As to quaternary structure, part of the 50S ribosomal subunit.

Its function is as follows. Binds to the 23S rRNA. The sequence is that of Large ribosomal subunit protein uL15 from Picosynechococcus sp. (strain ATCC 27264 / PCC 7002 / PR-6) (Agmenellum quadruplicatum).